We begin with the raw amino-acid sequence, 495 residues long: ATP synthase subunit beta, chloroplastic (495 aa).

172–179 (GGAGVGKT) provides a ligand contact to ATP.

The protein belongs to the ATPase alpha/beta chains family. As to quaternary structure, F-type ATPases have 2 components, CF(1) - the catalytic core - and CF(0) - the membrane proton channel. CF(1) has five subunits: alpha(3), beta(3), gamma(1), delta(1), epsilon(1). CF(0) has four main subunits: a(1), b(1), b'(1) and c(9-12).

Its subcellular location is the plastid. It localises to the chloroplast thylakoid membrane. The enzyme catalyses ATP + H2O + 4 H(+)(in) = ADP + phosphate + 5 H(+)(out). Functionally, produces ATP from ADP in the presence of a proton gradient across the membrane. The catalytic sites are hosted primarily by the beta subunits. This chain is ATP synthase subunit beta, chloroplastic, found in Pseudogaltonia clavata (Cape hyacinth).